The following is a 305-amino-acid chain: GMP synthase [glutamine-hydrolyzing] subunit B (305 aa).

The GMPS ATP-PPase domain occupies 2–184; that stretch reads VKPEKFIPKA…LKLPDEICER (183 aa). Residue 29–35 coordinates ATP; the sequence is SGGVDSS.

As to quaternary structure, heterodimer composed of a glutamine amidotransferase subunit (A) and a GMP-binding subunit (B).

It catalyses the reaction XMP + L-glutamine + ATP + H2O = GMP + L-glutamate + AMP + diphosphate + 2 H(+). It participates in purine metabolism; GMP biosynthesis; GMP from XMP (L-Gln route): step 1/1. Its function is as follows. Catalyzes the synthesis of GMP from XMP. This Methanosarcina barkeri (strain Fusaro / DSM 804) protein is GMP synthase [glutamine-hydrolyzing] subunit B.